The following is a 267-amino-acid chain: Putative N-acetylmuramoyl-L-alanine amidase RC0497 (267 aa).

The disordered stretch occupies residues Met1 to Pro25. Over residues Asn10–Asn19 the composition is skewed to polar residues. The region spanning Thr33–Gly141 is the N-acetylmuramoyl-L-alanine amidase domain.

Belongs to the N-acetylmuramoyl-L-alanine amidase 2 family.

Its subcellular location is the secreted. It carries out the reaction Hydrolyzes the link between N-acetylmuramoyl residues and L-amino acid residues in certain cell-wall glycopeptides.. This is Putative N-acetylmuramoyl-L-alanine amidase RC0497 from Rickettsia conorii (strain ATCC VR-613 / Malish 7).